The chain runs to 156 residues: Small ribosomal subunit protein uS7 (156 aa).

The protein belongs to the universal ribosomal protein uS7 family. In terms of assembly, part of the 30S ribosomal subunit. Contacts proteins S9 and S11.

One of the primary rRNA binding proteins, it binds directly to 16S rRNA where it nucleates assembly of the head domain of the 30S subunit. Is located at the subunit interface close to the decoding center, probably blocks exit of the E-site tRNA. This Limosilactobacillus fermentum (strain NBRC 3956 / LMG 18251) (Lactobacillus fermentum) protein is Small ribosomal subunit protein uS7.